The primary structure comprises 362 residues: E3 ubiquitin-protein ligase TM129 (362 aa).

The Lumenal portion of the chain corresponds to M1–V6. Residues T7–H27 traverse the membrane as a helical segment. Over S28–S56 the chain is Cytoplasmic. A helical transmembrane segment spans residues S57 to A77. Residues A78–K94 are Lumenal-facing. A helical transmembrane segment spans residues V95 to S115. Topologically, residues Q116–R362 are cytoplasmic. The segment at C285 to R350 adopts an RING-type; degenerate zinc-finger fold.

It belongs to the TMEM129 family. In terms of assembly, integral component of ER-resident dislocation complexes.

It is found in the endoplasmic reticulum membrane. It catalyses the reaction S-ubiquitinyl-[E2 ubiquitin-conjugating enzyme]-L-cysteine + [acceptor protein]-L-lysine = [E2 ubiquitin-conjugating enzyme]-L-cysteine + N(6)-ubiquitinyl-[acceptor protein]-L-lysine.. The protein operates within protein modification; protein ubiquitination. Functionally, E3 ubiquitin-protein ligase involved in ER-associated protein degradation, preferentially associates with the E2 enzyme UBE2J2. In Xenopus laevis (African clawed frog), this protein is E3 ubiquitin-protein ligase TM129 (tmem129).